The sequence spans 471 residues: MKPKTIIDKIWENHVVYREEGKPDLLYIDLHLVHEVTSPQAFEGLRQKGRKVRRPDLTFATMDHNVPTVNRFVITDEVARNQIAALERNCREFGIPLADLHSEEQGIVHVIGPELGLTQPGKTIVCGDSHTSTHGAFGALAFGIGTSEVEHVLATQTLWQHKPKTLQICINGRLGKGVTAKDVILAIIGRYGVGVGTGYIIEFTGEAIRRMSMEERMTICNMSIEAGARAGLISPDETTFAYLRGRKYAPKGEEFDKAVERWRALASDEGAKYDKTIEIDASTIAPMVTWGTNPAMSTSVDGVVPHPEQFESKTEQNAVRRALEYMGLKPGTPITDIPVQHVFIGSCTNSRLSDLRAAASIVKGKKVAPGVRALVVPGSQQVKKQAEAEGLAQIFIDAGFEWRDSGCSACLGMNPDIIPEGEHCASTSNRNFEGRQGKGARTHLVSPVMAAAAAIYGHFVDVRQLEAEPVC.

Positions 347, 407, and 410 each coordinate [4Fe-4S] cluster.

The protein belongs to the aconitase/IPM isomerase family. LeuC type 1 subfamily. In terms of assembly, heterodimer of LeuC and LeuD. It depends on [4Fe-4S] cluster as a cofactor.

The enzyme catalyses (2R,3S)-3-isopropylmalate = (2S)-2-isopropylmalate. Its pathway is amino-acid biosynthesis; L-leucine biosynthesis; L-leucine from 3-methyl-2-oxobutanoate: step 2/4. Functionally, catalyzes the isomerization between 2-isopropylmalate and 3-isopropylmalate, via the formation of 2-isopropylmaleate. The chain is 3-isopropylmalate dehydratase large subunit from Geobacillus kaustophilus (strain HTA426).